A 405-amino-acid chain; its full sequence is Argininosuccinate synthase (405 aa).

ATP contacts are provided by residues 10–18 (AYSGGLDTS) and Ala-37. Tyr-88 and Ser-93 together coordinate L-citrulline. Gly-118 is a binding site for ATP. L-aspartate is bound by residues Thr-120, Asn-124, and Asp-125. Position 124 (Asn-124) interacts with L-citrulline. 5 residues coordinate L-citrulline: Arg-128, Ser-179, Ser-188, Glu-264, and Tyr-276.

Belongs to the argininosuccinate synthase family. Type 1 subfamily. In terms of assembly, homotetramer.

It localises to the cytoplasm. The catalysed reaction is L-citrulline + L-aspartate + ATP = 2-(N(omega)-L-arginino)succinate + AMP + diphosphate + H(+). It functions in the pathway amino-acid biosynthesis; L-arginine biosynthesis; L-arginine from L-ornithine and carbamoyl phosphate: step 2/3. The chain is Argininosuccinate synthase from Pseudomonas fluorescens (strain ATCC BAA-477 / NRRL B-23932 / Pf-5).